Reading from the N-terminus, the 651-residue chain is MGQIFPRSANPIPRPPRGLATHHWLNFLQAAYRLEPGPSSYDFHQLKTVLKMALETPVWMCPINYSLLASLLPKGYPGQVNEILQVLIQTQTQIPSHPAPPPPSSPTHDPPDSDPQIPPPYVEPTAPQVLPVMHPHGVPPTHRPWQMKDLQAIKQEVSQAAPGSPQFMQTIRLAVQQFDPTAKDLQDLLQYLCSSLVASLHHQQLDSLISEAETRGITGYNPLAGPLRVQANNPQQQGLRREYQQLWLTAFAALPGSAKDPSWASILQGLEEPYHTFVERLNVALDNGLPEGTPKDPILRSLAYSNANKECQKLLQARGHTNSPLGDMLRACQAWTPRDKTKVLVVQPKKPPPNQPCFRCGKAGHWSRDCAQPRPPPGPCPLCQDPTHWKRDCPRLKPAIPEPEPEEDALLLDLPADIPHPKNLHRGGGLTSPPTLRQVHPNKDPASILPVIPLDPARRPLIKAQVDTQTSHPRTIEALLDTGADMTVLPIALFSSDTPLKDTSVLGAGGQTQDHFKLTSLPVLIRLPFRTTPIVLTSCLVDTKNNWAIIGRDALQQCQGVLYLPEAKRPPVILPIQAPAVLGLEHLPRPPEISQFPLNQNASRPCNTWSGRPWRQAISNRTPGQEITQYSQLKRPMEPGDSSTTCGPLIL.

The N-myristoyl glycine; by host moiety is linked to residue Gly-2. The segment at 93–143 (QIPSHPAPPPPSSPTHDPPDSDPQIPPPYVEPTAPQVLPVMHPHGVPPTHR) is disordered. Phosphoserine; by host MAPK1 is present on Ser-105. The short motif at 118 to 121 (PPPY) is the PPXY motif element. The PTAP/PSAP motif motif lies at 124 to 127 (PTAP). 2 consecutive CCHC-type zinc fingers follow at residues 355-372 (QPCF…DCAQ) and 378-395 (GPCP…DCPR). The region spanning 476–554 (IEALLDTGAD…NNWAIIGRDA (79 aa)) is the Peptidase A2 domain. Catalysis depends on Asp-481, which acts as the For protease activity; shared with dimeric partner. The tract at residues 632–651 (QLKRPMEPGDSSTTCGPLIL) is disordered. The span at 641–651 (DSSTTCGPLIL) shows a compositional bias: polar residues.

As to quaternary structure, homodimer; the homodimers are part of the immature particles. Interacts with human TSG101 and NEDD4; these interactions are essential for budding and release of viral particles. Homodimer; further assembles as homohexamers. Specific enzymatic cleavages by the viral protease yield mature proteins. The polyprotein is cleaved during and after budding, this process is termed maturation. The protease is autoproteolytically processed at its N- and C-termini. Post-translationally, phosphorylation of the matrix protein p19 by MAPK1 seems to play a role in budding. In terms of processing, myristoylated. Myristoylation of the matrix (MA) domain mediates the transport and binding of Gag polyproteins to the host plasma membrane and is required for the assembly of viral particles.

The protein localises to the virion. In terms of biological role, the matrix domain targets Gag, Gag-Pro and Gag-Pro-Pol polyproteins to the plasma membrane via a multipartite membrane binding signal, that includes its myristoylated N-terminus. Matrix protein. Functionally, forms the spherical core of the virus that encapsulates the genomic RNA-nucleocapsid complex. Its function is as follows. Binds strongly to viral nucleic acids and promote their aggregation. Also destabilizes the nucleic acids duplexes via highly structured zinc-binding motifs. In terms of biological role, the aspartyl protease mediates proteolytic cleavages of Gag and Gag-Pol polyproteins during or shortly after the release of the virion from the plasma membrane. Cleavages take place as an ordered, step-wise cascade to yield mature proteins. This process is called maturation. Displays maximal activity during the budding process just prior to particle release from the cell (Potential). Cleaves the translation initiation factor eIF4G leading to the inhibition of host cap-dependent translation. The protein is Gag-Pro polyprotein (gag-pro) of Human T-cell leukemia virus 1 (isolate Melanesia mel5 subtype C) (HTLV-1).